We begin with the raw amino-acid sequence, 608 residues long: Protein Spindly (608 aa).

Residue Met-1 is modified to N-acetylmethionine. The stretch at 1–445 (MEADITNLRN…LKLKYEPEER (445 aa)) forms a coiled coil. The tract at residues 465-487 (PEETEETAAASATEDGVSRLPPH) is disordered. Phosphoserine occurs at positions 516, 518, and 558.

The protein belongs to the Spindly family. Interacts with KNTC1 and ZW10. These interactions appear weak and may be transient or indirect. Interacts with dynein intermediate chain and dynactin (DCTN1). Interacts with the catalytically active form of USP45. Monoubiquitinated with'Lys-48' linkage. Deubiquitinated by USP45.

It localises to the cytoplasm. The protein resides in the cytoskeleton. It is found in the microtubule organizing center. The protein localises to the centrosome. Its subcellular location is the chromosome. It localises to the centromere. The protein resides in the kinetochore. It is found in the nucleus. The protein localises to the spindle pole. Its function is as follows. Required for the localization of dynein and dynactin to the mitotic kintochore. Dynein is believed to control the initial lateral interaction between the kinetochore and spindle microtubules and to facilitate the subsequent formation of end-on kinetochore-microtubule attachments mediated by the NDC80 complex. Also required for correct spindle orientation. Does not appear to be required for the removal of spindle assembly checkpoint (SAC) proteins from the kinetochore upon bipolar spindle attachment. Acts as an adapter protein linking the dynein motor complex to various cargos and converts dynein from a non-processive to a highly processive motor in the presence of dynactin. Facilitates the interaction between dynein and dynactin and activates dynein processivity (the ability to move along a microtubule for a long distance without falling off the track). Plays a role in cell migration. The chain is Protein Spindly (Spdl1) from Mus musculus (Mouse).